Consider the following 645-residue polypeptide: Acetyl-coenzyme A synthetase (645 aa).

CoA is bound by residues 190–193, Thr-309, and Asn-333; that span reads RGGR. ATP-binding positions include 385-387, 409-414, Asp-498, and Arg-513; these read GEP and DTWWQT. Residue Ser-521 coordinates CoA. Position 524 (Arg-524) interacts with ATP. Residues Val-535, His-537, and Val-540 each coordinate Mg(2+). Arg-582 contacts CoA. Position 607 is an N6-acetyllysine (Lys-607).

The protein belongs to the ATP-dependent AMP-binding enzyme family. Mg(2+) is required as a cofactor. In terms of processing, acetylated. Deacetylation by the SIR2-homolog deacetylase activates the enzyme.

The enzyme catalyses acetate + ATP + CoA = acetyl-CoA + AMP + diphosphate. In terms of biological role, catalyzes the conversion of acetate into acetyl-CoA (AcCoA), an essential intermediate at the junction of anabolic and catabolic pathways. AcsA undergoes a two-step reaction. In the first half reaction, AcsA combines acetate with ATP to form acetyl-adenylate (AcAMP) intermediate. In the second half reaction, it can then transfer the acetyl group from AcAMP to the sulfhydryl group of CoA, forming the product AcCoA. The polypeptide is Acetyl-coenzyme A synthetase (Beijerinckia indica subsp. indica (strain ATCC 9039 / DSM 1715 / NCIMB 8712)).